A 291-amino-acid chain; its full sequence is MKRVLLFLATNLAVMLVLSIVLSVLSSFFGISTRGSGGLLLMAAVFGFGGSIISLLMSKWMAKRSYGVQVIEQPRSEIEYWLFNTVQRQAQQTGIGMPEVGIYDSPDMNAFATGANRNKALVAVSSGLLYNMSRDEAEAVLAHEISHVANGDMVTLTLIQGVVNTFVIYISRVLAGIVSNFMRSDDEESSATGGIAYFAISMVFELIFGILASTIVMWFSRQREFRADAGSAKLVGKDKMIAALERLARGHDSQLDGSMMAFGINGKTAMTELFMSHPPLEKRIQALREMR.

2 helical membrane passes run 4–24 (VLLF…VLSV) and 37–57 (GGLL…SLLM). H143 contributes to the Zn(2+) binding site. E144 is a catalytic residue. H147 contacts Zn(2+). The next 2 helical transmembrane spans lie at 158 to 178 (LIQG…AGIV) and 198 to 218 (FAIS…IVMW). E224 is a Zn(2+) binding site.

It belongs to the peptidase M48B family. The cofactor is Zn(2+).

The protein localises to the cell inner membrane. This is Protease HtpX from Tolumonas auensis (strain DSM 9187 / NBRC 110442 / TA 4).